The primary structure comprises 275 residues: Envelope glycoprotein (275 aa).

3 disulfides stabilise this stretch: cysteine 1–cysteine 10, cysteine 18–cysteine 27, and cysteine 58–cysteine 62. The N-linked (GlcNAc...) asparagine; by host glycan is linked to asparagine 122. 4 disulfides stabilise this stretch: cysteine 164-cysteine 194, cysteine 187-cysteine 239, cysteine 204-cysteine 209, and cysteine 240-cysteine 245.

It belongs to the hantavirus envelope glycoprotein family. Homodimer. Homotetramer; forms heterotetrameric Gn-Gc spikes in the pre-fusion conformation. Homotrimer; forms homotrimer in the post-fusion conformation at acidic pH. Interacts (via C-terminus) with the nucleoprotein. In terms of processing, envelope polyprotein precursor is quickly cleaved in vivo just after synthesis, presumably by host signal peptidase.

The protein localises to the virion membrane. It localises to the host cell surface. The protein resides in the host Golgi apparatus membrane. Its subcellular location is the host endoplasmic reticulum membrane. In terms of biological role, forms homotetramers with glycoprotein N at the surface of the virion. Attaches the virion to host cell receptors including integrin ITGAV/ITGB3. This attachment induces virion internalization predominantly through clathrin-dependent endocytosis. Class II fusion protein that promotes fusion of viral membrane with host endosomal membrane after endocytosis of the virion. This is Envelope glycoprotein (GP) from Homo sapiens (Human).